The sequence spans 103 residues: N(4)-acetylcytidine amidohydrolase (103 aa).

Residues 7–93 (TFFERFEQDI…VIAEIYPGLE (87 aa)) form the ASCH domain. Lys21 (proton acceptor) is an active-site residue. Thr24 acts as the Nucleophile in catalysis. The active-site Proton donor is Glu74.

This sequence belongs to the N(4)-acetylcytidine amidohydrolase family.

It catalyses the reaction N(4)-acetylcytidine + H2O = cytidine + acetate + H(+). The enzyme catalyses N(4)-acetyl-2'-deoxycytidine + H2O = 2'-deoxycytidine + acetate + H(+). The catalysed reaction is N(4)-acetylcytosine + H2O = cytosine + acetate + H(+). Functionally, catalyzes the hydrolysis of N(4)-acetylcytidine (ac4C). This is N(4)-acetylcytidine amidohydrolase from Shewanella putrefaciens (strain CN-32 / ATCC BAA-453).